We begin with the raw amino-acid sequence, 1073 residues long: Envelopment polyprotein (1073 aa).

Residues 1–19 (MMKVIWFSSLICLVIQCSG) form the signal peptide. Topologically, residues 20–453 (DSGPIICAGP…NPQCYPAKKW (434 aa)) are lumenal. The cysteines at positions 26 and 49 are disulfide-linked. 2 N-linked (GlcNAc...) asparagine; by host glycosylation sites follow: Asn-33 and Asn-63. Disulfide bonds link Cys-143-Cys-156, Cys-180-Cys-327, Cys-206-Cys-216, Cys-258-Cys-305, Cys-287-Cys-292, Cys-349-Cys-352, Cys-356-Cys-424, and Cys-376-Cys-381. Residues 454–474 (LFIIIVILLGYAGLMLLTNVL) traverse the membrane as a helical segment. The segment at 475–521 (KAIGVWGSWVIAPVKLMFAIIKKLMRTVSCLVGKLMDRGRQVIHEEI) is golgi retention signal. Over 475 to 535 (KAIGVWGSWV…EGNQDDVRIE (61 aa)) the chain is Cytoplasmic. Residues 536–562 (MARPRRVRHWMYSPVILTILAIGLAEG) form an internal signal sequence for glycoprotein C region. Intrachain disulfides connect Cys-563–Cys-604, Cys-576–Cys-586, Cys-629–Cys-725, Cys-644–Cys-841, Cys-650–Cys-698, Cys-656–Cys-705, Cys-660–Cys-687, Cys-691–Cys-696, Cys-778–Cys-793, and Cys-809–Cys-823. Residues 563 to 1036 (CDEMVHADSK…ALFGNGLSRW (474 aa)) lie on the Lumenal side of the membrane. The tract at residues 650–656 (CRWAGDC) is fusion loop. The fusion loop stretch occupies residues 691–705 (CGGAACGCFNAAPSC). N-linked (GlcNAc...) asparagine; by host glycans are attached at residues Asn-853 and Asn-914. 3 disulfide bridges follow: Cys-908-Cys-978, Cys-918-Cys-921, and Cys-943-Cys-974. Residue Asn-936 is glycosylated (N-linked (GlcNAc...) asparagine; by host). A helical transmembrane segment spans residues 1037–1057 (ILGVIGVLLGGLALFFLIMFL). At 1058 to 1073 (LKLGTKQVFRSRTKLA) the chain is on the cytoplasmic side.

This sequence belongs to the phlebovirus envelope glycoprotein family. In terms of assembly, homodimer. Heterodimer with glycoprotein C. Homotrimer (postfusion). As to quaternary structure, heterodimer with glycoprotein N. In terms of processing, specific enzymatic cleavages in vivo yield mature proteins including glycoprotein C and glycoprotein N. Post-translationally, the cytoplasmic tail is Palmitoylated. Glycosylated. In terms of processing, palmitoylated.

The protein resides in the virion membrane. Its subcellular location is the host Golgi apparatus membrane. It localises to the host endoplasmic reticulum membrane. Structural component of the virion that interacts with glycoprotein C. It shields the hydrophobic fusion loops of the glycoprotein C, preventing premature fusion. The glycoprotein protrusions are arranged on an icosahedral lattice, with T=12 triangulation. They are able to attach the virion to the host cell receptor CD209/DC-SIGN and to promote fusion of membranes with the late endosome after clathrin-mediated endocytosis of the virion. Plays a role in the packaging of ribonucleoproteins and polymerase during virus assembly. Its function is as follows. Structural component of the virion that interacts with glycoprotein N. Acts as a class II fusion protein that is activated upon acidification and subsequent repositioning of the glycoprotein N. The glycoprotein protrusions are arranged on an icosahedral lattice, with T=12 triangulation. They are able to attach the virion to the host cell receptor CD209/DC-SIGN and to promote fusion of membranes with the late endosome after clathrin-mediated endocytosis of the virion. The chain is Envelopment polyprotein (GP) from SFTS phlebovirus (isolate SFTSV/Human/China/HB29/2010) (Severe fever with thrombocytopenia virus).